The primary structure comprises 901 residues: MLGIGNLAKLVFGTPNDRKVKSARPLVAQVNALEEQFRALSDADLIGKTRELQGRAQSGEDLDKLLPEAFANCREAARRALGLRAFDTQLMGGIFLHQGNIAEMKTGEGKTLVATFPAYLNALAGKGVHVVTVNDYLAKRDAHWMGKVFAQLGMTTGVVYPFQDDAEKREAYRADVTYATNNELGFDYLRDNMKGSIEQMTQRGHFFAIVDEVDSILIDEARTPLIISGPSQDRSELYKTLDAFMPELAPEHYKLDEKARNATFTEEGNEFLEKRLQAAGILPEGQTLYDPESTTIVHHANQAMRAHKLFMRDQHYIVRDDEVVLIDEFTGRMMKGRRLSDGLHQAIEAKEGVSIQPENVTLASVTFQNYFRLYDKLSGMTGTAATEAEEFAEIYKLGVVEVPTNRPVQRIDEHDRVYRTATEKYAAVIEAIKEAHAKGQPILVGTTSIEKSEMLSQMLTKEGIQHNVLNARQHEQEAKIVADAGKLGAVTIATNMAGRGTDIQLGGNVEMKVMEALAADPEANPDEVRARIEAEHAAEKQAVLDAGGLFVLATERHESRRIDNQLRGRSGRQGDPGRSLFFLSLEDDLMRIFGSERLDKVLSTLGMKEGEAIVHPWVNKSLERAQAKVEGRNFDIRKQLLKFDDVMNDQRKAIFSQRLEIMHTEEVGDIAADMRAQVIDDLIDRHLPPRAYAEQWDVKGLHDAVIDRLNMDLPITDWAGEDGVDQDTIRERIQQATDAYMAQKAEQFGPENMRQIEKQVLLQQIDSKWREHLVTLEHLRSVVGFRGYAQRDPLSEYKTEGFQLFETMLDGLRFDVTQQLARIRPLTDAEREQMLREYQQQQAETEAQMHPEHEEAEGGEVSGRVAGFDETDPTTWGNPSRNDPCPCGSGKKFKHCHGVLA.

ATP is bound by residues glutamine 89, glycine 107–threonine 111, and aspartate 502. The segment at tyrosine 838–aspartate 883 is disordered. Zn(2+) contacts are provided by cysteine 885, cysteine 887, cysteine 896, and histidine 897.

Belongs to the SecA family. As to quaternary structure, monomer and homodimer. Part of the essential Sec protein translocation apparatus which comprises SecA, SecYEG and auxiliary proteins SecDF-YajC and YidC. Zn(2+) serves as cofactor.

The protein resides in the cell inner membrane. It localises to the cytoplasm. It catalyses the reaction ATP + H2O + cellular proteinSide 1 = ADP + phosphate + cellular proteinSide 2.. Its function is as follows. Part of the Sec protein translocase complex. Interacts with the SecYEG preprotein conducting channel. Has a central role in coupling the hydrolysis of ATP to the transfer of proteins into and across the cell membrane, serving both as a receptor for the preprotein-SecB complex and as an ATP-driven molecular motor driving the stepwise translocation of polypeptide chains across the membrane. This chain is Protein translocase subunit SecA, found in Paracoccus denitrificans (strain Pd 1222).